Reading from the N-terminus, the 725-residue chain is Ophiobolin F synthase (725 aa).

The segment at 1-322 is (7Z)-ophiobola-7,19-dien-3-ol synthase; sequence MEYKYSTIVD…RYHADAKFNE (322 aa). Residues aspartate 93 and aspartate 97 each coordinate Mg(2+). Aspartate 93 provides a ligand contact to substrate. The short motif at 93 to 97 is the DDXXD 1 element; that stretch reads DDEID. Substrate is bound by residues 182 to 185, asparagine 226, 230 to 234, and 313 to 314; these read RCMD, SYEKE, and RY. Residues 226-234 carry the NSE/DTE motif; it reads NDLFSYEKE. Positions 323–725 are geranylfarnesyl diphosphate synthase; sequence LQMLRAEHGV…LRMMLELLKV (403 aa). The interval 362-388 is disordered; it reads GVNGVNGKRKRSGEETADDARTNGNGI. The span at 373–382 shows a compositional bias: basic and acidic residues; that stretch reads SGEETADDAR. Lysine 436, arginine 439, and histidine 468 together coordinate isopentenyl diphosphate. Residues aspartate 475 and aspartate 479 each coordinate Mg(2+). A DDXXD 2 motif is present at residues 475–479; the sequence is DDIED. Residue arginine 484 participates in dimethylallyl diphosphate binding. Residue arginine 485 coordinates isopentenyl diphosphate. Residues lysine 562, threonine 563, glutamine 601, asparagine 608, lysine 618, and lysine 628 each coordinate dimethylallyl diphosphate.

This sequence in the N-terminal section; belongs to the terpene synthase family. The protein in the C-terminal section; belongs to the FPP/GGPP synthase family. It depends on Mg(2+) as a cofactor.

It carries out the reaction isopentenyl diphosphate + (2E,6E)-farnesyl diphosphate = (2E,6E,10E)-geranylgeranyl diphosphate + diphosphate. The enzyme catalyses isopentenyl diphosphate + (2E,6E,10E)-geranylgeranyl diphosphate = (2E,6E,10E,14E)-geranylfarnesyl diphosphate + diphosphate. It catalyses the reaction (2E,6E,10E,14E)-geranylfarnesyl diphosphate + H2O = ophiobolin F + diphosphate. The protein operates within secondary metabolite biosynthesis; terpenoid biosynthesis. Functionally, bifunctional sesterterpene synthase that converts isopentenyl diphosphate (IPP) and dimethylallyl diphosphate (DMAPP) into ophiobolin F. The C-terminal prenyltransferase (PT) domain of AcldOS converts isopentenyl diphosphate and dimethylallyl diphosphate into geranylfarnesyl diphosphate (GFPP), whereas the N-terminal terpene cyclase (TC) domain catalyzes the cyclization of GFPP to ophiobolin F. This chain is Ophiobolin F synthase, found in Aspergillus calidoustus.